Reading from the N-terminus, the 233-residue chain is Ribose-5-phosphate isomerase A (233 aa).

Substrate is bound by residues Thr-28–Thr-31, Asp-85–Asp-88, and Lys-98–Gly-101. Catalysis depends on Glu-107, which acts as the Proton acceptor. Lys-125 lines the substrate pocket.

This sequence belongs to the ribose 5-phosphate isomerase family. As to quaternary structure, homodimer.

The catalysed reaction is aldehydo-D-ribose 5-phosphate = D-ribulose 5-phosphate. Its pathway is carbohydrate degradation; pentose phosphate pathway; D-ribose 5-phosphate from D-ribulose 5-phosphate (non-oxidative stage): step 1/1. In terms of biological role, catalyzes the reversible conversion of ribose-5-phosphate to ribulose 5-phosphate. The protein is Ribose-5-phosphate isomerase A of Roseiflexus sp. (strain RS-1).